A 549-amino-acid chain; its full sequence is Small ribosomal subunit protein bS1 (549 aa).

S1 motif domains are found at residues 21–87 (GSIV…LSRE), 105–171 (KATV…VSRR), 192–260 (GSEV…LGLK), 277–347 (NSKL…LGLK), 364–434 (GDKV…LGIK), and 451–512 (GAVV…LSVK).

The protein belongs to the bacterial ribosomal protein bS1 family.

Binds mRNA; thus facilitating recognition of the initiation point. It is needed to translate mRNA with a short Shine-Dalgarno (SD) purine-rich sequence. The protein is Small ribosomal subunit protein bS1 (rpsA) of Haemophilus influenzae (strain ATCC 51907 / DSM 11121 / KW20 / Rd).